Consider the following 322-residue polypeptide: Succinate/fumarate mitochondrial transporter (322 aa).

Solcar repeat units lie at residues 8–99, 111–202, and 212–303; these read SHPA…YRTL, GNTF…LKEF, and LPSW…VREH. A run of 6 helical transmembrane segments spans residues 11-31, 68-88, 114-134, 177-193, 219-235, and 278-295; these read AINL…CHPL, FLAL…KMAI, FVAG…PMEV, GVSL…GANF, CIGL…NAPL, and GITP…VTFT.

Belongs to the mitochondrial carrier (TC 2.A.29) family.

The protein localises to the mitochondrion inner membrane. Its function is as follows. Transports cytoplasmic succinate, derived from isocitrate by the action of isocitrate lyase in the cytosol, into the mitochondrial matrix in exchange for fumarate. The polypeptide is Succinate/fumarate mitochondrial transporter (SFC1) (Saccharomyces cerevisiae (strain ATCC 204508 / S288c) (Baker's yeast)).